The sequence spans 205 residues: Hydrogenase-4 component A (205 aa).

4 4Fe-4S ferredoxin-type domains span residues 2 to 31 (NRFVVAEPLWCTGCNTCLAACSDVHKTQGL), 41 to 72 (KTSTITAPVVCHHCEEAPCLQVCPVNAISQRD), 73 to 102 (DAIQLNESLCIGCKLCAVVCPFGAISASGS), and 140 to 172 (QTVAVKCDLCDFLPEGPACVRACPNQALRLITG). 16 residues coordinate [4Fe-4S] cluster: Cys12, Cys15, Cys18, Cys22, Cys51, Cys54, Cys59, Cys63, Cys82, Cys85, Cys88, Cys92, Cys146, Cys149, Cys158, and Cys162.

[4Fe-4S] cluster serves as cofactor.

Its function is as follows. Probable electron transfer protein for hydrogenase 4. This is Hydrogenase-4 component A from Escherichia coli (strain K12).